A 329-amino-acid polypeptide reads, in one-letter code: Malate dehydrogenase (329 aa).

12–18 serves as a coordination point for NAD(+); the sequence is GAAGQIG. Substrate is bound by residues arginine 93 and arginine 99. NAD(+) is bound by residues asparagine 106, glutamine 113, and 130–132; that span reads VGN. The substrate site is built by asparagine 132 and arginine 163. Histidine 188 acts as the Proton acceptor in catalysis.

Belongs to the LDH/MDH superfamily. MDH type 2 family.

It catalyses the reaction (S)-malate + NAD(+) = oxaloacetate + NADH + H(+). Functionally, catalyzes the reversible oxidation of malate to oxaloacetate. This chain is Malate dehydrogenase, found in Frankia casuarinae (strain DSM 45818 / CECT 9043 / HFP020203 / CcI3).